Reading from the N-terminus, the 430-residue chain is DD-carboxypeptidase/endopeptidase Mpg (430 aa).

Residues His295, Asp299, and His375 each coordinate Zn(2+).

This sequence belongs to the peptidase M23B family. Monomer. The cofactor is Zn(2+). Post-translationally, likely to be synthesized as a proenzyme. The cleavage of the N-terminal domain is probably required for the activation of the enzyme.

The protein localises to the cell outer membrane. Functionally, has both endopeptidase and DD-carboxypeptidase activities. Degrades cell wall peptidoglycan (PG) to allow consummate expression of pili. In Neisseria meningitidis serogroup B (strain ATCC 13091 / M2091), this protein is DD-carboxypeptidase/endopeptidase Mpg.